A 186-amino-acid chain; its full sequence is Elongation factor P (186 aa).

Belongs to the elongation factor P family.

The protein localises to the cytoplasm. Its pathway is protein biosynthesis; polypeptide chain elongation. Functionally, involved in peptide bond synthesis. Stimulates efficient translation and peptide-bond synthesis on native or reconstituted 70S ribosomes in vitro. Probably functions indirectly by altering the affinity of the ribosome for aminoacyl-tRNA, thus increasing their reactivity as acceptors for peptidyl transferase. This is Elongation factor P from Neisseria gonorrhoeae (strain NCCP11945).